The primary structure comprises 503 residues: MEEFQGYFELDRSRQHDFLYPLLFREYIYALAHDHGLKKSILFENAGYDNKSSSIIVKRLITRMYQQNPLIFSANDSIQNPFFGQNKNFYSQIISEGFAVIVEIPFSLRLVSSLERKEIAKSHKLRAIHSIFPFLEDKFSHLDYVSDVLIPYHIHLEILVQTLRYWVNDASSLHLLRFFLHEYWNSLITQKNHITIFSKGNPRLFLFLYNSHICEYEYFFLFLRNQSSHLRSTSSGIFFERIYFYVKIEHFVKVFFDNDFQCILWFFKDPFMHYVRYQGKSILASKDTPLLMKKWKYYLVNLWQYHFYVWFQPGRIDINQLCKYSLYFLGYRSSVRLNSSVVRSQMLENSFLINNAMKKFETIVPIIPLIGSLSKANFCDTLGHPISKPTRADSSDSDIIDRFLRISRNLSHYHSGSSKKKSLYRVKYILRLSCVKTLARKHKKTVRTFLKRLGSEFLEEFLTEEEVVLSLIFPRTYSTSRRLYRGRIWYLDITSINDLVNYE.

The protein belongs to the intron maturase 2 family. MatK subfamily.

It is found in the plastid. It localises to the chloroplast. Its function is as follows. Usually encoded in the trnK tRNA gene intron. Probably assists in splicing its own and other chloroplast group II introns. This Eucalyptus globulus (Tasmanian blue gum) protein is Maturase K.